The following is an 838-amino-acid chain: Periostin (838 aa).

An N-terminal signal peptide occupies residues 1 to 23 (MVPLLPLYALLLLFLCDINPANA). Positions 42–96 (GPNVCALQQILGTKKKYFSSCKNWYQGAICGKKTTVLYECCPGYMRMEGMKGCPA) constitute an EMI domain. Intrachain disulfides connect Cys46-Cys82, Cys71-Cys335, Cys81-Cys94, Cys210-Cys313, and Cys469-Cys474. At Cys62 the chain carries S-cysteinyl cysteine. FAS1 domains lie at 99–232 (PIDH…DRVL), 236–367 (GTSI…DEVL), 370–494 (DSAK…REII), and 498–630 (EKSL…DKLL). N-linked (GlcNAc...) asparagine glycosylation occurs at Asn601. The tract at residues 811-838 (QGDTPAKKIPANKRVQGPRRRSREGRSQ) is disordered. The span at 826-838 (QGPRRRSREGRSQ) shows a compositional bias: basic residues.

In terms of assembly, homodimer. Interacts with BMP1 and fibronectin. In terms of processing, gamma-carboxylation is controversial. Gamma-carboxyglutamated; gamma-carboxyglutamate residues are formed by vitamin K dependent carboxylation; these residues may be required for binding to calcium. According to a more recent report in human, does not contain vitamin K-dependent gamma-carboxyglutamate residues. Preferentially expressed in periosteum and periodontal ligament. Also expressed in the developing and adult heart.

The protein localises to the golgi apparatus. The protein resides in the secreted. It localises to the extracellular space. It is found in the extracellular matrix. In terms of biological role, induces cell attachment and spreading and plays a role in cell adhesion. Enhances incorporation of BMP1 in the fibronectin matrix of connective tissues, and subsequent proteolytic activation of lysyl oxidase LOX. In Mus musculus (Mouse), this protein is Periostin (Postn).